The primary structure comprises 875 residues: Alanine--tRNA ligase (875 aa).

His564, His568, Cys666, and His670 together coordinate Zn(2+).

The protein belongs to the class-II aminoacyl-tRNA synthetase family. In terms of assembly, homotetramer. Requires Zn(2+) as cofactor.

Its subcellular location is the cytoplasm. The catalysed reaction is tRNA(Ala) + L-alanine + ATP = L-alanyl-tRNA(Ala) + AMP + diphosphate. Its function is as follows. Catalyzes the attachment of alanine to tRNA(Ala) in a two-step reaction: alanine is first activated by ATP to form Ala-AMP and then transferred to the acceptor end of tRNA(Ala). Also edits incorrectly charged Ser-tRNA(Ala) and Gly-tRNA(Ala) via its editing domain. The sequence is that of Alanine--tRNA ligase from Citrobacter koseri (strain ATCC BAA-895 / CDC 4225-83 / SGSC4696).